Consider the following 98-residue polypeptide: Large ribosomal subunit protein uL23 (98 aa).

It belongs to the universal ribosomal protein uL23 family. In terms of assembly, part of the 50S ribosomal subunit. Contacts protein L29, and trigger factor when it is bound to the ribosome.

Functionally, one of the early assembly proteins it binds 23S rRNA. One of the proteins that surrounds the polypeptide exit tunnel on the outside of the ribosome. Forms the main docking site for trigger factor binding to the ribosome. This is Large ribosomal subunit protein uL23 from Herpetosiphon aurantiacus (strain ATCC 23779 / DSM 785 / 114-95).